The following is a 252-amino-acid chain: Pre-rRNA-processing protein pno1 (252 aa).

The tract at residues 1–57 is disordered; sequence MPAPTALLRKSDEPLSAEEPSLTFSSDAQASGQGEAPSPIPTESAQHSDMRIDEESR. Positions 22–32 are enriched in polar residues; that stretch reads LTFSSDAQASG. Residues 46–57 show a composition bias toward basic and acidic residues; that stretch reads QHSDMRIDEESR. The 53-residue stretch at 173 to 225 folds into the KH domain; that stretch reads GEHLSRAIGRIAGKDGKTKFAIENASRTRVVLQGTKVTILGRFRDLGIAQEAI.

This sequence belongs to the PNO1 family. Component of the small ribosomal subunit, ribosomal RNA processing complex (SSU RRP complex).

The protein resides in the cytoplasm. Its subcellular location is the nucleus. The protein localises to the nucleolus. Its function is as follows. Required for small ribosomal subunit (SSU) synthesis. Has a role in the processing of early nucleolar and late cytoplasmic pre-RNA species. The protein is Pre-rRNA-processing protein pno1 (pno1) of Aspergillus fumigatus (strain ATCC MYA-4609 / CBS 101355 / FGSC A1100 / Af293) (Neosartorya fumigata).